The primary structure comprises 374 residues: Queuine tRNA-ribosyltransferase (374 aa).

The active-site Proton acceptor is the aspartate 89. Substrate contacts are provided by residues 89–93 (DSGGF), aspartate 143, glutamine 187, and glycine 214. Residues 245–251 (GVGKPED) form an RNA binding region. Aspartate 264 (nucleophile) is an active-site residue. Positions 269–273 (TRNAR) are RNA binding; important for wobble base 34 recognition. The Zn(2+) site is built by cysteine 302, cysteine 304, cysteine 307, and histidine 333.

This sequence belongs to the queuine tRNA-ribosyltransferase family. Homodimer. Within each dimer, one monomer is responsible for RNA recognition and catalysis, while the other monomer binds to the replacement base PreQ1. It depends on Zn(2+) as a cofactor.

It catalyses the reaction 7-aminomethyl-7-carbaguanine + guanosine(34) in tRNA = 7-aminomethyl-7-carbaguanosine(34) in tRNA + guanine. Its pathway is tRNA modification; tRNA-queuosine biosynthesis. Functionally, catalyzes the base-exchange of a guanine (G) residue with the queuine precursor 7-aminomethyl-7-deazaguanine (PreQ1) at position 34 (anticodon wobble position) in tRNAs with GU(N) anticodons (tRNA-Asp, -Asn, -His and -Tyr). Catalysis occurs through a double-displacement mechanism. The nucleophile active site attacks the C1' of nucleotide 34 to detach the guanine base from the RNA, forming a covalent enzyme-RNA intermediate. The proton acceptor active site deprotonates the incoming PreQ1, allowing a nucleophilic attack on the C1' of the ribose to form the product. After dissociation, two additional enzymatic reactions on the tRNA convert PreQ1 to queuine (Q), resulting in the hypermodified nucleoside queuosine (7-(((4,5-cis-dihydroxy-2-cyclopenten-1-yl)amino)methyl)-7-deazaguanosine). In Shewanella frigidimarina (strain NCIMB 400), this protein is Queuine tRNA-ribosyltransferase.